A 259-amino-acid polypeptide reads, in one-letter code: uncharacterized protein (259 aa).

It belongs to the methyltransferase superfamily.

This is an uncharacterized protein from Mycobacteroides abscessus (strain ATCC 19977 / DSM 44196 / CCUG 20993 / CIP 104536 / JCM 13569 / NCTC 13031 / TMC 1543 / L948) (Mycobacterium abscessus).